Reading from the N-terminus, the 606-residue chain is Lysosomal cobalamin transporter ABCD4 (606 aa).

In terms of domain architecture, ABC transmembrane type-1 spans 39–332; the sequence is NVLMFMTLLC…CFTQLIDLST (294 aa). A run of 5 helical transmembrane segments spans residues 43–63, 76–96, 190–210, 279–299, and 314–334; these read FMTL…VGLI, LDGF…NSTL, IFGY…PIVT, YLGS…GVYG, and AFVC…STTL. The region spanning 389 to 603 is the ABC transporter domain; sequence LDRVSILAPS…GGGSWELTRI (215 aa). 421–428 lines the ATP pocket; it reads GNTGTGKT.

This sequence belongs to the ABC transporter superfamily. ABCD family. Peroxisomal fatty acyl CoA transporter (TC 3.A.1.203) subfamily. Homodimer or heterodimer. Interacts with LMBRD1; this interaction induces the translocation of ABCD4 from the ER to the lysosome membrane. Interacts with LMBRD1 and MMACHC; this interaction ensures the transport of cobalamin from the lysosome to the cytosol.

Its subcellular location is the endoplasmic reticulum membrane. It localises to the lysosome membrane. It carries out the reaction an R-cob(III)alamin(out) + ATP + H2O = an R-cob(III)alamin(in) + ADP + phosphate + H(+). Lysosomal membrane protein that transports cobalamin (Vitamin B12) from the lysosomal lumen to the cytosol in an ATP-dependent manner. Targeted by LMBRD1 lysosomal chaperone from the endoplasmic reticulum to the lysosomal membrane. Then forms a complex with lysosomal chaperone LMBRD1 and cytosolic MMACHC to transport cobalamin across the lysosomal membrane. The sequence is that of Lysosomal cobalamin transporter ABCD4 from Mus musculus (Mouse).